Consider the following 183-residue polypeptide: Ribulose bisphosphate carboxylase small subunit, chloroplastic (183 aa).

Residues 1–58 (MASSMLSTAAVACINRASPAQASMVAPFTGLKSTSAFPTTRKTTTDITSIASNGGRVQ) constitute a chloroplast transit peptide.

This sequence belongs to the RuBisCO small chain family. Heterohexadecamer of 8 large and 8 small subunits.

The protein resides in the plastid. The protein localises to the chloroplast. In terms of biological role, ruBisCO catalyzes two reactions: the carboxylation of D-ribulose 1,5-bisphosphate, the primary event in carbon dioxide fixation, as well as the oxidative fragmentation of the pentose substrate. Both reactions occur simultaneously and in competition at the same active site. Although the small subunit is not catalytic it is essential for maximal activity. The polypeptide is Ribulose bisphosphate carboxylase small subunit, chloroplastic (Hevea brasiliensis (Para rubber tree)).